Here is a 196-residue protein sequence, read N- to C-terminus: Serine recombinase PinR (196 aa).

The 141-residue stretch at Arg3–Gly143 folds into the Resolvase/invertase-type recombinase catalytic domain. Residue Ser11 is the O-(5'-phospho-DNA)-serine intermediate of the active site.

It belongs to the site-specific recombinase resolvase family.

The protein is Serine recombinase PinR (pinR) of Escherichia coli (strain K12).